Reading from the N-terminus, the 558-residue chain is Delta-1-pyrroline-5-carboxylate dehydrogenase, mitochondrial (558 aa).

Residues S198, K223, and 276–280 (GSTGV) each bind NAD(+). The Proton acceptor role is filled by E306. C340 functions as the Nucleophile in the catalytic mechanism. NAD(+) is bound at residue E438.

Belongs to the aldehyde dehydrogenase family.

The protein localises to the mitochondrion matrix. It catalyses the reaction L-glutamate 5-semialdehyde + NAD(+) + H2O = L-glutamate + NADH + 2 H(+). It participates in amino-acid degradation; L-proline degradation into L-glutamate; L-glutamate from L-proline: step 2/2. Functionally, irreversible conversion of delta-1-pyrroline-5-carboxylate (P5C), derived either from proline or ornithine, to glutamate. This is a necessary step in the pathway interconnecting the urea and tricarboxylic acid cycles. This is Delta-1-pyrroline-5-carboxylate dehydrogenase, mitochondrial from Dictyostelium discoideum (Social amoeba).